The chain runs to 386 residues: Protein salvador homolog 1 (386 aa).

2 positions are modified to phosphoserine: S95 and S137. WW domains lie at 200-233 (LPLP…HPLE) and 235-268 (EGLP…HPCA). A Phosphothreonine modification is found at T211. Positions 322–369 (ILKWELFQLADLDTYQGMLKLLFMKELEQIVKLYEAYRQALLTELENR) constitute an SARAH domain. The stretch at 345–374 (MKELEQIVKLYEAYRQALLTELENRKQRQQ) forms a coiled coil.

In terms of assembly, homodimer. Stabilized through interaction with STK3/MST2 or STK4/MST1. Interacts (via SARAH domain) with isoform 1 of NEK2. Interacts with ESR1 only in the presence of STK3/MST2. Interacts with WTIP and AJUBA. Phosphorylated by STK3/MST2 and STK4/MST1. Phosphorylation is not required for SAV1 stability and may increase the number of protein binding sites on the scaffold molecule. In terms of tissue distribution, ubiquitously expressed in adult tissues with the highest level found in testis.

The protein localises to the nucleus. It is found in the cytoplasm. In terms of biological role, regulator of STK3/MST2 and STK4/MST1 in the Hippo signaling pathway which plays a pivotal role in organ size control and tumor suppression by restricting proliferation and promoting apoptosis. The core of this pathway is composed of a kinase cascade wherein STK3/MST2 and STK4/MST1, in complex with its regulatory protein SAV1, phosphorylates and activates LATS1/2 in complex with its regulatory protein MOB1, which in turn phosphorylates and inactivates YAP1 oncoprotein and WWTR1/TAZ. Phosphorylation of YAP1 by LATS1/2 inhibits its translocation into the nucleus to regulate cellular genes important for cell proliferation, cell death, and cell migration. SAV1 is required for STK3/MST2 and STK4/MST1 activation and promotes cell-cycle exit and terminal differentiation in developing epithelial tissues. Plays a role in centrosome disjunction by regulating the localization of NEK2 to centrosomes, and its ability to phosphorylate CROCC and CEP250. In conjunction with STK3/MST2, activates the transcriptional activity of ESR1 through the modulation of its phosphorylation. The chain is Protein salvador homolog 1 (Sav1) from Mus musculus (Mouse).